The following is a 93-amino-acid chain: Large ribosomal subunit protein uL23 (93 aa).

The protein belongs to the universal ribosomal protein uL23 family. Part of the 50S ribosomal subunit. Contacts protein L29, and trigger factor when it is bound to the ribosome.

Its function is as follows. One of the early assembly proteins it binds 23S rRNA. One of the proteins that surrounds the polypeptide exit tunnel on the outside of the ribosome. Forms the main docking site for trigger factor binding to the ribosome. This is Large ribosomal subunit protein uL23 from Opitutus terrae (strain DSM 11246 / JCM 15787 / PB90-1).